The sequence spans 444 residues: N-succinylarginine dihydrolase (444 aa).

Substrate contacts are provided by residues 19–28 (AGLSFGNVAS), Asn-110, and 137–138 (HR). Residue Glu-174 is part of the active site. Residue Arg-214 coordinates substrate. His-250 is a catalytic residue. Residues Asp-252 and Asn-362 each coordinate substrate. The Nucleophile role is filled by Cys-368.

The protein belongs to the succinylarginine dihydrolase family. Homodimer.

The catalysed reaction is N(2)-succinyl-L-arginine + 2 H2O + 2 H(+) = N(2)-succinyl-L-ornithine + 2 NH4(+) + CO2. The protein operates within amino-acid degradation; L-arginine degradation via AST pathway; L-glutamate and succinate from L-arginine: step 2/5. Functionally, catalyzes the hydrolysis of N(2)-succinylarginine into N(2)-succinylornithine, ammonia and CO(2). The protein is N-succinylarginine dihydrolase of Shewanella sp. (strain ANA-3).